Here is a 125-residue protein sequence, read N- to C-terminus: Protein MGF 110-7L (125 aa).

An N-terminal signal peptide occupies residues 1-20; it reads MLVIILGVIGLLASSNLVSS. N-linked (GlcNAc...) asparagine; by host glycans are attached at residues N69, N70, and N105.

The protein belongs to the asfivirus MGF 110 family.

Plays a role in virus cell tropism, and may be required for efficient virus replication in macrophages. The chain is Protein MGF 110-7L from Ornithodoros (relapsing fever ticks).